The following is a 365-amino-acid chain: Aminomethyltransferase (365 aa).

Belongs to the GcvT family. The glycine cleavage system is composed of four proteins: P, T, L and H.

It catalyses the reaction N(6)-[(R)-S(8)-aminomethyldihydrolipoyl]-L-lysyl-[protein] + (6S)-5,6,7,8-tetrahydrofolate = N(6)-[(R)-dihydrolipoyl]-L-lysyl-[protein] + (6R)-5,10-methylene-5,6,7,8-tetrahydrofolate + NH4(+). Its function is as follows. The glycine cleavage system catalyzes the degradation of glycine. The polypeptide is Aminomethyltransferase (Natranaerobius thermophilus (strain ATCC BAA-1301 / DSM 18059 / JW/NM-WN-LF)).